A 305-amino-acid chain; its full sequence is UDP-N-acetylenolpyruvoylglucosamine reductase 2 (305 aa).

In terms of domain architecture, FAD-binding PCMH-type spans 33-197 (VGGKADVFVA…LEARFELEEG (165 aa)). Arg-176 is an active-site residue. The active-site Proton donor is Ser-226. Glu-296 is a catalytic residue.

This sequence belongs to the MurB family. The cofactor is FAD.

The protein localises to the cytoplasm. The catalysed reaction is UDP-N-acetyl-alpha-D-muramate + NADP(+) = UDP-N-acetyl-3-O-(1-carboxyvinyl)-alpha-D-glucosamine + NADPH + H(+). The protein operates within cell wall biogenesis; peptidoglycan biosynthesis. Cell wall formation. This Bacillus cereus (strain ATCC 10987 / NRS 248) protein is UDP-N-acetylenolpyruvoylglucosamine reductase 2.